We begin with the raw amino-acid sequence, 345 residues long: Dense granule protein 4 (345 aa).

Positions 1–20 (MQGTWFSLFVVVMVSHLACG) are cleaved as a signal peptide. Polar residues predominate over residues 227–251 (SVSVSTEDSGLTGVKDSSSSESTVT). The disordered stretch occupies residues 227–271 (SVSVSTEDSGLTGVKDSSSSESTVTPADEAASESEEGDKTSRKSK). A helical membrane pass occupies residues 276 to 296 (ILTGLGVAATLAAAAAAAKAV). The tract at residues 298 to 345 (GFGGTRTSTAPAEAGKTELDDGYRPPPFNPRPSPYAELLKDLERMRKE) is disordered. Positions 321–330 (RPPPFNPRPS) are enriched in pro residues. Positions 335–345 (LLKDLERMRKE) are enriched in basic and acidic residues.

In terms of processing, O-glycosylated.

The protein localises to the secreted. The protein resides in the parasitophorous vacuole lumen. Its subcellular location is the parasitophorous vacuole membrane. It is found in the cytoplasmic vesicle. It localises to the secretory vesicle. Functionally, major granular component involved in excreted-secreted antigen (ESA) immunity. The chain is Dense granule protein 4 (GRA4) from Toxoplasma gondii.